A 214-amino-acid chain; its full sequence is Thiamine pyrophosphokinase (214 aa).

The protein belongs to the thiamine pyrophosphokinase family.

It carries out the reaction thiamine + ATP = thiamine diphosphate + AMP + H(+). The protein operates within cofactor biosynthesis; thiamine diphosphate biosynthesis; thiamine diphosphate from thiamine: step 1/1. Its function is as follows. Catalyzes the ATP-dependent phosphorylation of thiamine to thiamine pyrophosphate. Is involved in thiamine salvage. The protein is Thiamine pyrophosphokinase of Bacillus subtilis (strain 168).